The following is a 687-amino-acid chain: Glycine--tRNA ligase beta subunit (687 aa).

The protein belongs to the class-II aminoacyl-tRNA synthetase family. As to quaternary structure, tetramer of two alpha and two beta subunits.

It is found in the cytoplasm. It catalyses the reaction tRNA(Gly) + glycine + ATP = glycyl-tRNA(Gly) + AMP + diphosphate. The protein is Glycine--tRNA ligase beta subunit of Neisseria meningitidis serogroup A / serotype 4A (strain DSM 15465 / Z2491).